Reading from the N-terminus, the 248-residue chain is Type II restriction enzyme XhoI (248 aa).

It belongs to the XhoI type II restriction endonuclease family.

It catalyses the reaction Endonucleolytic cleavage of DNA to give specific double-stranded fragments with terminal 5'-phosphates.. Its function is as follows. A P subtype restriction enzyme that recognizes the double-stranded sequence 5'-CTCGAG-3' and cleaves after C-1. This is Type II restriction enzyme XhoI from Xanthomonas vasicola.